The chain runs to 608 residues: Dihydroxy-acid dehydratase, chloroplastic (608 aa).

A chloroplast-targeting transit peptide spans 1-34 (MQATIFSPRATLFPCKPLLPSHNVNSRRPSIISC). An N-acetylserine modification is found at serine 35. [2Fe-2S] cluster is bound at residue cysteine 100. A Mg(2+)-binding site is contributed by aspartate 132. Position 173 (cysteine 173) interacts with [2Fe-2S] cluster. Position 174 (aspartate 174) interacts with Mg(2+). Cysteine 245 provides a ligand contact to [2Fe-2S] cluster. Glutamate 497 lines the Mg(2+) pocket. Serine 523 serves as the catalytic Proton acceptor.

This sequence belongs to the IlvD/Edd family. [2Fe-2S] cluster serves as cofactor. The cofactor is Mg(2+).

It localises to the plastid. The protein localises to the chloroplast. It catalyses the reaction (2R)-2,3-dihydroxy-3-methylbutanoate = 3-methyl-2-oxobutanoate + H2O. The enzyme catalyses (2R,3R)-2,3-dihydroxy-3-methylpentanoate = (S)-3-methyl-2-oxopentanoate + H2O. The protein operates within amino-acid biosynthesis; L-isoleucine biosynthesis; L-isoleucine from 2-oxobutanoate: step 3/4. It participates in amino-acid biosynthesis; L-valine biosynthesis; L-valine from pyruvate: step 3/4. Is highly competitively inhibited by the fungal sesquiterpenoid aspterric acid, which is effective as a herbicide in spray applications. Functions in the biosynthesis of branched-chain amino acids. Catalyzes the dehydration of (2R,3R)-2,3-dihydroxy-3-methylpentanoate (2,3-dihydroxy-3-methylvalerate) into 2-oxo-3-methylpentanoate (2-oxo-3-methylvalerate) and of (2R)-2,3-dihydroxy-3-methylbutanoate (2,3-dihydroxyisovalerate) into 2-oxo-3-methylbutanoate (2-oxoisovalerate), the penultimate precursor to L-isoleucine and L-valine, respectively. The sequence is that of Dihydroxy-acid dehydratase, chloroplastic from Arabidopsis thaliana (Mouse-ear cress).